Here is a 161-residue protein sequence, read N- to C-terminus: 2-C-methyl-D-erythritol 2,4-cyclodiphosphate synthase (161 aa).

The a divalent metal cation site is built by Asp8 and His10. 4-CDP-2-C-methyl-D-erythritol 2-phosphate is bound by residues 8-10 (DVH) and 34-35 (HS). His42 is a binding site for a divalent metal cation. Residues 56–58 (DIG), 61–65 (FPDTD), 100–106 (AQSPKMA), 132–135 (TTEE), and Phe139 each bind 4-CDP-2-C-methyl-D-erythritol 2-phosphate.

The protein belongs to the IspF family. As to quaternary structure, homotrimer. Requires a divalent metal cation as cofactor.

The catalysed reaction is 4-CDP-2-C-methyl-D-erythritol 2-phosphate = 2-C-methyl-D-erythritol 2,4-cyclic diphosphate + CMP. The protein operates within isoprenoid biosynthesis; isopentenyl diphosphate biosynthesis via DXP pathway; isopentenyl diphosphate from 1-deoxy-D-xylulose 5-phosphate: step 4/6. Involved in the biosynthesis of isopentenyl diphosphate (IPP) and dimethylallyl diphosphate (DMAPP), two major building blocks of isoprenoid compounds. Catalyzes the conversion of 4-diphosphocytidyl-2-C-methyl-D-erythritol 2-phosphate (CDP-ME2P) to 2-C-methyl-D-erythritol 2,4-cyclodiphosphate (ME-CPP) with a corresponding release of cytidine 5-monophosphate (CMP). This Clostridioides difficile (strain 630) (Peptoclostridium difficile) protein is 2-C-methyl-D-erythritol 2,4-cyclodiphosphate synthase.